A 305-amino-acid polypeptide reads, in one-letter code: tRNA pseudouridine synthase B (305 aa).

The active-site Nucleophile is the D39.

The protein belongs to the pseudouridine synthase TruB family. Type 1 subfamily.

It catalyses the reaction uridine(55) in tRNA = pseudouridine(55) in tRNA. In terms of biological role, responsible for synthesis of pseudouridine from uracil-55 in the psi GC loop of transfer RNAs. In Staphylococcus aureus (strain bovine RF122 / ET3-1), this protein is tRNA pseudouridine synthase B.